The chain runs to 530 residues: MILFSVSPVSIWVFVIYAVTIIIAIYRLFFHPYAKYPGPFLAKLTSWYSIYHTYYGDLHIDIWECHNKYELGNYVRYGPNRILVNTSEGLNAIYSQGKNTQKAKAYRKVSLVPGVHPTFSMIDNQGHAKLRRLVGQGLSNAHIRMYDQELRQSALLFASRLGEEIDRFEPNQPHGNHDGWTSPKNVASWSNYFTFDVMSHLVYGTSYDLLTDSENHWVIEGVLGQMRRISFLTMLPELEDMRFDRILFPDARRKAYRFSAKSREILEARKSKSEEMRHQDAKVDVFLRLLSAKDPETGESLSDKQLWAESNLLIIAGSDTSSTGLAASFFYLSRNPSAYDRVKQEVRSALTTSEDISQGPKLLSCTYLRACVLESLRLSPPLGGAMWRQTMPGGLFIAGSDHDFHIPGGCEVGTGVYAIHHNEEYYPEPFRFRPERWLPQEVGDEAVAKAQSAFQAFSLGPRSCPGKNLAMLEIPFALAAVMMDYDFRKVDSPLGGVGEGKGKFVGQYQTFWAFTSIKDGPYIQFKRREP.

The helical transmembrane segment at Val-6–Tyr-26 threads the bilayer. Asn-85 carries an N-linked (GlcNAc...) asparagine glycan. Position 464 (Cys-464) interacts with heme.

Belongs to the cytochrome P450 family. It depends on heme as a cofactor.

It localises to the membrane. The protein operates within secondary metabolite biosynthesis. Functionally, cytochrome P450 monooxygenase; part of the gene cluster that mediates the biosynthesis of the cyclic tetrapeptide apicidin F (APF). The non-ribosomal peptide synthetase apf1 incorporates four different amino acids to produce apicidin F: L-phenylalanine, D-pipecolic acid (D-pip), N-methoxy-L-tryptophan and L-2-aminooctanedioic acid. L-Phenylalanine is the only proteinogenic amino acid directly used by apf1. The 3 other apf1 substrates are non-proteinogenic and have to be modified by other enzymes of the cluster. Lysine is converted to delta-1-pyrroline-5-carboxylate (P5C) which is reduced to L-pipecolic acid (L-pip) by apf3. L-pip is epimerized to D-pip, probably by apf1 activity, prior to incorporation. L-Tryptophan is N-oxidyzed by one of the cytochrome P450 monooxygenases (apf7 or apf8), and further methylated at the hydroxy group by the O-methyltransferase apf6 to yield N-methoxy-L-tryptophan. The synthesis of the fourth apf1 substrate is more complex. The fatty acid synthase apf5 is involved in the synthesis of the octanoic acid backbone of L-2-aminooctanedioic acid by fixing one acetyl-CoA unit and three malonyl-CoA units. Then one of the cytochrome P450 monooxygenases (apf7 or apf8) may oxidize this backbone to 2-oxooctanoic acid. The aminotransferase apf4 is predicted to catalyze the exchange of the keto group with an amino group. The next step would be the oxidation of 2-aminooctanoic acid by one of the cytochrome P450 monooxygenases (apf7 or apf8). The last step is the oxidation of 2-amino-8-hydroxyoctanoic acid to 2-aminooctanedioic acid is catalyzed by the FAD-dependent monooxygenase apf9. The chain is Cytochrome P450 monooxygenase apf7 from Gibberella fujikuroi (strain CBS 195.34 / IMI 58289 / NRRL A-6831) (Bakanae and foot rot disease fungus).